Consider the following 211-residue polypeptide: Urease accessory protein UreG (211 aa).

12-19 is a GTP binding site; that stretch reads GPVGAGKT.

This sequence belongs to the SIMIBI class G3E GTPase family. UreG subfamily. In terms of assembly, homodimer. UreD, UreF and UreG form a complex that acts as a GTP-hydrolysis-dependent molecular chaperone, activating the urease apoprotein by helping to assemble the nickel containing metallocenter of UreC. The UreE protein probably delivers the nickel.

It localises to the cytoplasm. Its function is as follows. Facilitates the functional incorporation of the urease nickel metallocenter. This process requires GTP hydrolysis, probably effectuated by UreG. The polypeptide is Urease accessory protein UreG (Paracoccus denitrificans (strain Pd 1222)).